The primary structure comprises 638 residues: Eukaryotic translation initiation factor 2A (638 aa).

WD repeat units follow at residues 287 to 329 and 331 to 370; these read SKEG…FDFG and GPRN…KLAN. A compositionally biased stretch (basic and acidic residues) spans 441–450; that stretch reads KITKAKHEGI. The disordered stretch occupies residues 441-593; sequence KITKAKHEGI…SDKERKIRSV (153 aa). Position 463 is a phosphothreonine (T463). Residues 492–501 show a composition bias toward low complexity; the sequence is AAAGGVNGNK. Residues 583–593 are compositionally biased toward basic and acidic residues; the sequence is ISDKERKIRSV.

This sequence belongs to the WD repeat EIF2A family.

In terms of biological role, functions in the early steps of protein synthesis of a small number of specific mRNAs. Acts by directing the binding of methionyl-tRNAi to 40S ribosomal subunits. In contrast to the eIF-2 complex, it binds methionyl-tRNAi to 40S subunits in a codon-dependent manner, whereas the eIF-2 complex binds methionyl-tRNAi to 40S subunits in a GTP-dependent manner. The sequence is that of Eukaryotic translation initiation factor 2A from Drosophila melanogaster (Fruit fly).